The sequence spans 69 residues: Large ribosomal subunit protein uL29 (69 aa).

Belongs to the universal ribosomal protein uL29 family.

In Parasynechococcus marenigrum (strain WH8102), this protein is Large ribosomal subunit protein uL29.